The primary structure comprises 173 residues: Archaemetzincin (173 aa).

His-130 is a Zn(2+) binding site. The active-site Proton acceptor is the Glu-131. Zn(2+) is bound by residues His-134, His-140, Cys-141, Cys-146, Cys-165, and Cys-168.

It belongs to the peptidase M54 family. As to quaternary structure, monomer. Zn(2+) is required as a cofactor.

In terms of biological role, probable zinc metalloprotease whose natural substrate is unknown. This is Archaemetzincin from Halobacterium salinarum (strain ATCC 29341 / DSM 671 / R1).